We begin with the raw amino-acid sequence, 336 residues long: Fructose-1,6-bisphosphatase class 1 (336 aa).

Mg(2+) is bound by residues Glu98, Asp117, Leu119, and Asp120. Residues Asp120–Ser123, Asn210, and Lys276 each bind substrate. Glu282 is a binding site for Mg(2+).

The protein belongs to the FBPase class 1 family. Homotetramer. Mg(2+) is required as a cofactor.

It localises to the cytoplasm. The catalysed reaction is beta-D-fructose 1,6-bisphosphate + H2O = beta-D-fructose 6-phosphate + phosphate. The protein operates within carbohydrate biosynthesis; gluconeogenesis. This Caulobacter vibrioides (strain ATCC 19089 / CIP 103742 / CB 15) (Caulobacter crescentus) protein is Fructose-1,6-bisphosphatase class 1.